The primary structure comprises 159 residues: Phosphopantetheine adenylyltransferase (159 aa).

An ATP-binding site is contributed by His16. Substrate-binding residues include Lys40, Met72, and Arg86. ATP contacts are provided by residues 87-89, Glu97, and 122-128; these read GLR and YQYLSAS.

This sequence belongs to the bacterial CoaD family. In terms of assembly, homohexamer. It depends on Mg(2+) as a cofactor.

It localises to the cytoplasm. It carries out the reaction (R)-4'-phosphopantetheine + ATP + H(+) = 3'-dephospho-CoA + diphosphate. It functions in the pathway cofactor biosynthesis; coenzyme A biosynthesis; CoA from (R)-pantothenate: step 4/5. Functionally, reversibly transfers an adenylyl group from ATP to 4'-phosphopantetheine, yielding dephospho-CoA (dPCoA) and pyrophosphate. This chain is Phosphopantetheine adenylyltransferase, found in Dehalococcoides mccartyi (strain ATCC BAA-2100 / JCM 16839 / KCTC 5957 / BAV1).